Reading from the N-terminus, the 354-residue chain is Squamosa promoter-binding-like protein 15 (354 aa).

The tract at residues 1–25 (MELLMCSGQAESGGSSSTESSSLSG) is disordered. The segment covering 7–25 (SGQAESGGSSSTESSSLSG) has biased composition (low complexity). Residues 56 to 133 (TARCQVEGCR…ACHNERRRKP (78 aa)) form an SBP-type zinc finger. Zn(2+)-binding residues include cysteine 59, cysteine 64, cysteine 81, histidine 84, cysteine 100, cysteine 103, histidine 107, and cysteine 119. A Bipartite nuclear localization signal motif is present at residues 116-132 (KRSCRRRLACHNERRRK).

Requires Zn(2+) as cofactor.

It localises to the nucleus. Trans-acting factor that binds specifically to the consensus nucleotide sequence 5'-TNCGTACAA-3'. This Arabidopsis thaliana (Mouse-ear cress) protein is Squamosa promoter-binding-like protein 15 (SPL15).